Consider the following 302-residue polypeptide: Tissue factor pathway inhibitor (302 aa).

The signal sequence occupies residues 1-28 (MTNKLKKDHAFWAAVCLLLSIVPELLNA). BPTI/Kunitz inhibitor domains lie at 53-103 (CAMK…RKTC), 124-174 (CFLE…RNTC), and 222-272 (CLEP…NRAC). 9 disulfides stabilise this stretch: Cys53–Cys103, Cys62–Cys86, Cys78–Cys99, Cys124–Cys174, Cys133–Cys157, Cys149–Cys170, Cys222–Cys272, Cys231–Cys255, and Cys247–Cys268. Asn144 carries N-linked (GlcNAc...) asparagine glycosylation. 2 N-linked (GlcNAc...) asparagine glycosylation sites follow: Asn251 and Asn261.

Most abundant in heart, lung, kidney, and aortic endothelial cells.

The protein localises to the secreted. Inhibits factor X (X(a)) directly and, in a Xa-dependent way, inhibits VIIa/tissue factor activity, presumably by forming a quaternary Xa/LACI/VIIa/TF complex. It possesses an antithrombotic action and also the ability to associate with lipoproteins in plasma. The chain is Tissue factor pathway inhibitor (Tfpi) from Rattus norvegicus (Rat).